A 167-amino-acid chain; its full sequence is NAD(P)H-quinone oxidoreductase subunit I, chloroplastic (167 aa).

4Fe-4S ferredoxin-type domains follow at residues 55-84 (GRIHFEFDKCIACEVCVRVCPIDLPVVDWK) and 95-124 (LNYSIDFGICIFCGNCVEYCPTNCLSMTEE). Cysteine 64, cysteine 67, cysteine 70, cysteine 74, cysteine 104, cysteine 107, cysteine 110, and cysteine 114 together coordinate [4Fe-4S] cluster.

Belongs to the complex I 23 kDa subunit family. As to quaternary structure, NDH is composed of at least 16 different subunits, 5 of which are encoded in the nucleus. Requires [4Fe-4S] cluster as cofactor.

It is found in the plastid. The protein localises to the chloroplast thylakoid membrane. The catalysed reaction is a plastoquinone + NADH + (n+1) H(+)(in) = a plastoquinol + NAD(+) + n H(+)(out). It carries out the reaction a plastoquinone + NADPH + (n+1) H(+)(in) = a plastoquinol + NADP(+) + n H(+)(out). NDH shuttles electrons from NAD(P)H:plastoquinone, via FMN and iron-sulfur (Fe-S) centers, to quinones in the photosynthetic chain and possibly in a chloroplast respiratory chain. The immediate electron acceptor for the enzyme in this species is believed to be plastoquinone. Couples the redox reaction to proton translocation, and thus conserves the redox energy in a proton gradient. The sequence is that of NAD(P)H-quinone oxidoreductase subunit I, chloroplastic from Lepidium virginicum (Virginia pepperweed).